We begin with the raw amino-acid sequence, 85 residues long: Hepcidin (85 aa).

The N-terminal stretch at 1–22 (MALSTRIQAACLLLLLLASVAS) is a signal peptide. A propeptide spanning residues 23 to 54 (VSVLPHQTGQLTDLRAQDTAGAEAGLQPTLQL) is cleaved from the precursor. 4 cysteine pairs are disulfide-bonded: C67–C83, C70–C73, C71–C79, and C74–C82.

It belongs to the hepcidin family. Interacts with SLC40A1; this interaction promotes SLC40A1 rapid ubiquitination.

It is found in the secreted. Its function is as follows. Liver-produced hormone that constitutes the main circulating regulator of iron absorption and distribution across tissues. Acts by promoting endocytosis and degradation of ferroportin/SLC40A1, leading to the retention of iron in iron-exporting cells and decreased flow of iron into plasma. Controls the major flows of iron into plasma: absorption of dietary iron in the intestine, recycling of iron by macrophages, which phagocytose old erythrocytes and other cells, and mobilization of stored iron from hepatocytes. Functionally, has strong antimicrobial activity against E.coli ML35P N.cinerea and weaker against S.epidermidis, S.aureus and group b streptococcus bacteria. Active against the fungus C.albicans. No activity against P.aeruginosa. This Canis lupus familiaris (Dog) protein is Hepcidin (HAMP).